The primary structure comprises 2449 residues: Nonribisomal peptide synthetase phqB (2449 aa).

Positions 253–654 (IQVHSGPGRL…GRRDTVVKIR (402 aa)) are adenylation 1. The 76-residue stretch at 795–870 (LPMTPNEDVL…LRTVAKEARP (76 aa)) folds into the Carrier 1 domain. Serine 815 bears the O-(pantetheine 4'-phosphoryl)serine mark. The segment at 913 to 1337 (QDIYPTTPLQ…LISDRDSELL (425 aa)) is condensation 1. Positions 1357–1756 (EAQVTRNPSK…TFTFLGRTNQ (400 aa)) are adenylation 2. The Carrier 2 domain occupies 1915–1993 (WALSKHIGQL…MVAEMIDRTP (79 aa)). The residue at position 1952 (serine 1952) is an O-(pantetheine 4'-phosphoryl)serine. Residues 2041 to 2297 (LTGATGFLGT…VAAVDWVASL (257 aa)) are reductase (R) domain. NADPH contacts are provided by threonine 2045, methionine 2249, and asparagine 2259.

This sequence belongs to the NRP synthetase family.

The protein operates within alkaloid biosynthesis. In terms of biological role, nonribisomal peptide synthetase; part of the gene cluster that mediates the biosynthesis of paraherquamide, a fungal indole alkaloid that belongs to a family of natural products containing a characteristic bicyclo[2.2.2]diazaoctane core. The first steps in the biosynthesis of paraherquamide is the production of the beta-methyl-proline precursor from L-isoleucine. They require oxidation of a terminally hydroxylated L-isoleucine to the corresponding aldehyde by enzymes which have still to be identified. Spontaneous cyclization and dehydration would yield the 4-methyl pyrolline-5-carboxylic acid, which is then reduced by the pyrroline-5-carboxylate reductase phqD leading to the beta-methyl-proline precursor. The next step of paraherquamide biosynthesis involves coupling of beta-methyl-proline and L-tryptophan by the bimodular NRPS phqB, to produce a monooxopiperazine intermediate. The reductase (R) domain of phqB utilizes NADPH for hydride transfer to reduce the thioester bond of the T domain-tethered linear dipeptide to a hemithioaminal intermediate, which spontaneously cleaves the C-S bond to release the aldehyde product. This compound undergoes spontaneous cyclization and dehydration to give a dienamine which is reverse prenylated at C-2 by the reverse prenyltransferase phqJ. The other prenyltransferase present in the cluster, phqI may be a redundant gene in the pathway. During biosynthetic assembly, the key step to produce the polycyclic core is catalyzed by the bifunctional reductase and intramolecular [4+2] Diels-Alderase, phqE, resulting in formation of the [2.2.2] diazaoctane intermediate preparaherquamide. Following formation of preparaherquamide, an indole 2,3-epoxidation-initiated pinacol-like rearrangement is catalyzed by the phqK FAD-dependent monooxygenase. The prenyltransferase phqA, the cytochrome P450 monooxygenase phqL, and the FAD-linked oxidoreductase phqH (or the cytochrome P450 monooxygenase phqM), are proposed to be involved in the formation of the pyran ring. The FAD-dependent monooxygenase phqK is likely responsible for generation of the spiro-oxindole, and the N-methylation is likely mediated by the phqN methyltransferase leading to the isolable natural product paraherquamide F. However, the order of these biosynthetic steps has still to be determined. In late-stage paraherquamide biosynthesis, the third P450 monooxygenase, phqO, is probably responsible for the C-14 hydroxylation, transforming paraherquamide F to paraherquamide G, and paraherquamide E to the final product paraherquamide A. The expansion from the 6-membered ring pyran (in paraherquamides F and G) to the 7-membered dioxepin ring (in paraherquamides A and E) represents a poorly understood but intriguing process that probably involves the 2-oxoglutarate-dependent dioxygenase phqC. Finally, the remaining members of the paraherquamide cluster, including phqI as well as phqM (or phqH), do not have a clearly prescribed role and appear to be redundant. In Penicillium fellutanum, this protein is Nonribisomal peptide synthetase phqB.